The following is a 288-amino-acid chain: Pyridoxal kinase PdxY (288 aa).

Residues S10 and 45–46 each bind substrate; that span reads TQ. Positions 112, 143, 148, and 181 each coordinate ATP. D222 is a binding site for substrate.

The protein belongs to the pyridoxine kinase family. PdxY subfamily. In terms of assembly, homodimer. Mg(2+) serves as cofactor.

It catalyses the reaction pyridoxal + ATP = pyridoxal 5'-phosphate + ADP + H(+). It participates in cofactor metabolism; pyridoxal 5'-phosphate salvage; pyridoxal 5'-phosphate from pyridoxal: step 1/1. In terms of biological role, pyridoxal kinase involved in the salvage pathway of pyridoxal 5'-phosphate (PLP). Catalyzes the phosphorylation of pyridoxal to PLP. The sequence is that of Pyridoxal kinase PdxY from Paraburkholderia xenovorans (strain LB400).